Here is a 261-residue protein sequence, read N- to C-terminus: 5'-nucleotidase SurE (261 aa).

The a divalent metal cation site is built by Asp-8, Asp-9, Ser-40, and Asn-94.

This sequence belongs to the SurE nucleotidase family. The cofactor is a divalent metal cation.

It localises to the cytoplasm. It catalyses the reaction a ribonucleoside 5'-phosphate + H2O = a ribonucleoside + phosphate. Its function is as follows. Nucleotidase that shows phosphatase activity on nucleoside 5'-monophosphates. The polypeptide is 5'-nucleotidase SurE (Anaplasma marginale (strain St. Maries)).